The chain runs to 136 residues: Small ribosomal subunit protein uS19 (136 aa).

It belongs to the universal ribosomal protein uS19 family.

Its function is as follows. Protein S19 forms a complex with S13 that binds strongly to the 16S ribosomal RNA. This is Small ribosomal subunit protein uS19 (rps19) from Methanothermobacter thermautotrophicus (strain ATCC 29096 / DSM 1053 / JCM 10044 / NBRC 100330 / Delta H) (Methanobacterium thermoautotrophicum).